We begin with the raw amino-acid sequence, 1813 residues long: Latent-transforming growth factor beta-binding protein 2 (1813 aa).

Positions 1–35 are cleaved as a signal peptide; that stretch reads MRAPTTARCSGCIQRVRWRGFLPLVLAVLMGTSHA. A heparin-binding region spans residues 94–115; it reads NPGWLAEAEARRPPRTQQLRRV. Residues 103 to 152 are disordered; that stretch reads ARRPPRTQQLRRVQPPVQTRRSHPRGQQQIAARAAPSVARLETPQRPAAA. A compositionally biased stretch (polar residues) spans 108 to 132; that stretch reads RTQQLRRVQPPVQTRRSHPRGQQQI. N-linked (GlcNAc...) asparagine glycosylation is present at Asn175. Residues 181 to 213 enclose the EGF-like 1 domain; it reads IKPVCQPPCQNRGSCSRPQVCICRSGFRGARCE. Intrachain disulfides connect Cys185–Cys195, Cys189–Cys201, and Cys203–Cys212. The segment at 220-305 is disordered; it reads EFDPQNARPV…QLMSNALPSG (86 aa). Residues 226–243 form a heparin-binding region; the sequence is ARPVPRRSVERAPGPHRS. The segment covering 257–266 has biased composition (pro residues); sequence LVPPPSPPPS. Polar residues predominate over residues 293–302; it reads ANGQLMSNAL. Asn328 carries N-linked (GlcNAc...) asparagine glycosylation. 329-339 lines the heparin pocket; it reads LTEKIKKIKVV. Residues 381–413 form the EGF-like 2 domain; sequence RIYFCQIPCLNGGRCIGRDECWCPANSTGKFCH. 3 cysteine pairs are disulfide-bonded: Cys385/Cys395, Cys389/Cys401, and Cys403/Cys412. A glycan (N-linked (GlcNAc...) asparagine) is linked at Asn406. Ser491 carries the post-translational modification Phosphoserine. The tract at residues 492–524 is disordered; the sequence is VETRASHRPHGNLGHSPWASNSIPARAGEAPRP. The TB 1 domain maps to 536-588; the sequence is GQCYLSTVNGQCANPLGSLTSQEDCCGSVGTFWGVTSCAPCPPRQEGPAFPVI. 3 disulfides stabilise this stretch: Cys538–Cys560, Cys547–Cys573, and Cys561–Cys576. Asn603 is a glycosylation site (N-linked (GlcNAc...) asparagine). An EGF-like 3; calcium-binding domain is found at 609–649; the sequence is DINECLTLGLCKDSECVNTRGSYLCTCRPGLMLDPSRSRCV. Cystine bridges form between Cys613/Cys624, Cys619/Cys633, Cys635/Cys648, Cys661/Cys683, Cys670/Cys696, Cys684/Cys699, and Cys685/Cys711. Residues 659–711 enclose the TB 2 domain; sequence GLCYRSLGSGTCTLPLVHRITKQICCCSRVGKAWGSTCEQCPLPGTEAFREIC. 2 disordered regions span residues 730–761 and 787–819; these read KAEE…QPLR and SAPH…PAEE. In terms of domain architecture, EGF-like 4 spans 835-877; it reads DFDPCFAGASNICGPGTCVSLPNGYRCVCSPGYQLHPSQDYCT. 49 cysteine pairs are disulfide-bonded: Cys839–Cys852, Cys847–Cys861, Cys863–Cys876, Cys882–Cys893, Cys887–Cys902, Cys904–Cys919, Cys925–Cys936, Cys931–Cys945, Cys947–Cys959, Cys965–Cys976, Cys971–Cys985, Cys988–Cys999, Cys1005–Cys1016, Cys1011–Cys1025, Cys1027–Cys1040, Cys1046–Cys1057, Cys1052–Cys1066, Cys1069–Cys1082, Cys1088–Cys1099, Cys1094–Cys1108, Cys1111–Cys1124, Cys1130–Cys1142, Cys1137–Cys1151, Cys1153–Cys1165, Cys1171–Cys1183, Cys1177–Cys1192, Cys1194–Cys1207, Cys1213–Cys1224, Cys1219–Cys1233, Cys1235–Cys1249, Cys1255–Cys1268, Cys1263–Cys1277, Cys1281–Cys1293, Cys1299–Cys1311, Cys1305–Cys1320, Cys1322–Cys1335, Cys1341–Cys1353, Cys1348–Cys1362, Cys1364–Cys1378, Cys1405–Cys1428, Cys1415–Cys1440, Cys1429–Cys1443, Cys1430–Cys1455, Cys1481–Cys1494, Cys1489–Cys1503, Cys1505–Cys1518, Cys1524–Cys1534, Cys1529–Cys1543, and Cys1545–Cys1558. In terms of domain architecture, EGF-like 5; calcium-binding spans 878 to 920; it reads DDNECMRNPCEGRGRCVNSVGSYSCLCYPGYTLVTLGDTQECQ. One can recognise an EGF-like 6; calcium-binding domain in the interval 921–960; sequence DIDECEQPGVCSGGRCSNTEGSYHCECDRGYIMVRKGHCQ. In terms of domain architecture, EGF-like 7; calcium-binding spans 961–1000; sequence DINECRHPGTCPDGRCVNSPGSYTCLACEEGYVGQSGSCV. Residues 1001-1041 form the EGF-like 8; calcium-binding domain; the sequence is DVNECLTPGICTHGRCINMEGSFRCSCEPGYEVTPDKKGCR. In terms of domain architecture, EGF-like 9; calcium-binding spans 1042 to 1083; that stretch reads DVDECASRASCPTGLCLNTEGSFTCSACQSGYWVNEDGTACE. In terms of domain architecture, EGF-like 10; calcium-binding spans 1084-1125; sequence DLDECAFPGVCPTGVCTNTVGSFSCKDCDQGYRPNPLGNRCE. In terms of domain architecture, EGF-like 11; calcium-binding spans 1126 to 1166; the sequence is DVDECEGPQSSCRGGECKNTEGSYQCLCHQGFQLVNGTMCE. N-linked (GlcNAc...) asparagine glycosylation is present at Asn1161. One can recognise an EGF-like 12; calcium-binding domain in the interval 1167-1208; the sequence is DVNECVGEEHCAPHGECLNSLGSFFCLCAPGFASAEGGTRCQ. Positions 1209–1250 constitute an EGF-like 13; calcium-binding domain; sequence DVDECAATDPCPGGHCVNTEGSFSCLCETASFQPSPDSGECL. In terms of domain architecture, EGF-like 14; calcium-binding spans 1251–1294; the sequence is DIDECEDREDPVCGAWRCENSPGSYRCILDCQPGFYVAPNGDCI. Residues 1295-1336 enclose the EGF-like 15; calcium-binding domain; sequence DIDECANDTVCGNHGFCDNTDGSFRCLCDQGFETSPSGWECV. Asn1301 carries an N-linked (GlcNAc...) asparagine glycan. The 43-residue stretch at 1337-1379 folds into the EGF-like 16; calcium-binding domain; it reads DVNECELMMAVCGDALCENVEGSFLCLCASDLEEYDAEEGHCR. Positions 1403–1455 constitute a TB 3 domain; the sequence is MECYSEHNGGPPCSQILGQNSTQAECCCTQGARWGKACAPCPSEDSVEFSQLC. The N-linked (GlcNAc...) asparagine glycan is linked to Asn1422. An EGF-like 17; calcium-binding domain is found at 1477-1519; sequence DADECVLFGPALCQNGRCSNIVPGYICLCNPGYHYDASSRKCQ. The 40-residue stretch at 1520–1559 folds into the EGF-like 18; calcium-binding domain; that stretch reads DHNECQDLACENGECVNQEGSFHCLCNPPLTLDLSGQRCV. A glycan (N-linked (GlcNAc...) asparagine) is linked at Asn1560. Positions 1576 to 1628 constitute a TB 4 domain; sequence DICWKKVTNDVCSQPLRGHHTTYTECCCQDGEAWSQQCALCPPRSSEVYAQLC. 4 cysteine pairs are disulfide-bonded: Cys1578-Cys1601, Cys1587-Cys1613, Cys1602-Cys1616, and Cys1603-Cys1628. The tract at residues 1631-1813 is C-terminal domain; the sequence is ARIEAERGAG…PGPPHCAAKE (183 aa). A disordered region spans residues 1671 to 1717; that stretch reads YLGPEDTAPEPPFSNPASQPGDNTPVLEPPLQPSELQPHYLASHSEP. The EGF-like 19; calcium-binding domain occupies 1725-1765; sequence QAEECGILNGCENGRCVRVREGYTCDCFEGFQLDAPTLACV. Cystine bridges form between Cys1729-Cys1740, Cys1735-Cys1749, Cys1751-Cys1764, Cys1770-Cys1785, Cys1780-Cys1794, and Cys1796-Cys1809. In terms of domain architecture, EGF-like 20; calcium-binding spans 1766-1810; that stretch reads DVNECEDLNGPARLCAHGHCENTEGSYRCHCSPGYVAEPGPPHCA.

It belongs to the LTBP family. In terms of assembly, forms part of the large latent transforming growth factor beta precursor complex; removal is essential for activation of complex. Interacts with SDC4. Interacts (via C-terminal domain) with FBN1 (via N-terminal domain) in a Ca(+2)-dependent manner. N-Glycosylated. Post-translationally, contains hydroxylated asparagine residues. Expressed in the anterior chamber of the eye.

The protein resides in the secreted. It is found in the extracellular space. The protein localises to the extracellular matrix. Its function is as follows. May play an integral structural role in elastic-fiber architectural organization and/or assembly. The polypeptide is Latent-transforming growth factor beta-binding protein 2 (Ltbp2) (Mus musculus (Mouse)).